The following is a 142-amino-acid chain: D-aminoacyl-tRNA deacylase (142 aa).

The Gly-cisPro motif, important for rejection of L-amino acids signature appears at Gly-133 to Pro-134.

This sequence belongs to the DTD family. As to quaternary structure, homodimer.

The protein localises to the cytoplasm. It carries out the reaction glycyl-tRNA(Ala) + H2O = tRNA(Ala) + glycine + H(+). The enzyme catalyses a D-aminoacyl-tRNA + H2O = a tRNA + a D-alpha-amino acid + H(+). Functionally, an aminoacyl-tRNA editing enzyme that deacylates mischarged D-aminoacyl-tRNAs. Also deacylates mischarged glycyl-tRNA(Ala), protecting cells against glycine mischarging by AlaRS. Acts via tRNA-based rather than protein-based catalysis; rejects L-amino acids rather than detecting D-amino acids in the active site. By recycling D-aminoacyl-tRNA to D-amino acids and free tRNA molecules, this enzyme counteracts the toxicity associated with the formation of D-aminoacyl-tRNA entities in vivo and helps enforce protein L-homochirality. The sequence is that of D-aminoacyl-tRNA deacylase from Acidothermus cellulolyticus (strain ATCC 43068 / DSM 8971 / 11B).